A 90-amino-acid polypeptide reads, in one-letter code: MGKRLYAVAYDIPDDTRRVKLANLLKSYGERVQLSVFECYLDERLLEDLRRRARRLLDLGQDALRIYPVAGQVEVLGVGPLPELREVQVL.

Aspartate 11 lines the Mg(2+) pocket.

Belongs to the CRISPR-associated endoribonuclease Cas2 protein family. Homodimer, forms a heterotetramer with a Cas1 homodimer. Requires Mn(2+) as cofactor. Mg(2+) serves as cofactor.

With respect to regulation, inhibited by EDTA and at pH 6.0. In terms of biological role, CRISPR (clustered regularly interspaced short palindromic repeat), is an adaptive immune system that provides protection against mobile genetic elements (viruses, transposable elements and conjugative plasmids). CRISPR clusters contain sequences complementary to antecedent mobile elements and target invading nucleic acids. CRISPR clusters are transcribed and processed into CRISPR RNA (crRNA). Involved in the integration of spacer DNA into the CRISPR cassette. Functions as a dsDNA endonuclease and as a weak ssRNase. The protein is CRISPR-associated endonuclease Cas2 2 (cas2b) of Thermus thermophilus (strain ATCC BAA-163 / DSM 7039 / HB27).